Here is a 1706-residue protein sequence, read N- to C-terminus: 5'-3' exoribonuclease 1 (1706 aa).

The residue at position 1348 (S1348) is a Phosphoserine. The segment at 1619–1706 is disordered; that stretch reads ENKEAQSSQA…VNFGVSKPSE (88 aa). Residues 1623–1642 show a composition bias toward polar residues; the sequence is AQSSQATPVQTSQPDSSNIV. At S1645 the chain carries Phosphoserine. The span at 1647–1657 shows a compositional bias: low complexity; sequence RESSSASLKSS. Positions 1658–1676 are enriched in polar residues; it reads PIAQPASSFQVETASQGHS. Positions 1677 to 1694 are enriched in basic residues; it reads ISHHKSTPISSSRRKSRK.

Belongs to the 5'-3' exonuclease family. As to quaternary structure, found in a mRNP complex with UPF1, UPF2, UPF3B and XRN1. Associates with alpha and beta tubulins. Interacts with DIS3L2. Interacts with ZC3HAV1 in an RNA-dependent manner. Interacts with ZFP36L1. Interacts with TRIM71 (via NHL repeats) in an RNA-dependent manner. Interacts with YTHDC2 (via ANK repeats). Interacts with DHX34; the interaction is RNA-independent. In terms of tissue distribution, expressed in heart, brain, pancreas, spleen, testis, osteogenic sarcoma (OGS) biopsy and primary cell lines.

It is found in the cytoplasm. Major 5'-3' exoribonuclease involved in mRNA decay. Required for the 5'-3'-processing of the G4 tetraplex-containing DNA and RNA substrates. The kinetic of hydrolysis is faster for G4 RNA tetraplex than for G4 DNA tetraplex and monomeric RNA tetraplex. Binds to RNA and DNA. Plays a role in replication-dependent histone mRNA degradation. May act as a tumor suppressor protein in osteogenic sarcoma (OGS). In Homo sapiens (Human), this protein is 5'-3' exoribonuclease 1.